Here is a 342-residue protein sequence, read N- to C-terminus: 4-hydroxy-2-oxovalerate aldolase (342 aa).

In terms of domain architecture, Pyruvate carboxyltransferase spans 7–257 (VWITEVALRD…KTGIDLYKMM (251 aa)). 15 to 16 (RD) lines the substrate pocket. D16 serves as a coordination point for Mn(2+). H19 (proton acceptor) is an active-site residue. Substrate is bound by residues S169 and H196. Mn(2+) contacts are provided by H196 and H198. Y287 is a substrate binding site.

This sequence belongs to the 4-hydroxy-2-oxovalerate aldolase family.

The enzyme catalyses (S)-4-hydroxy-2-oxopentanoate = acetaldehyde + pyruvate. The chain is 4-hydroxy-2-oxovalerate aldolase (pheE) from Geobacillus stearothermophilus (Bacillus stearothermophilus).